A 197-amino-acid polypeptide reads, in one-letter code: Phosphoheptose isomerase (197 aa).

Residues 36 to 197 (MVQCLVSEGK…IDQQLFGSTE (162 aa)) enclose the SIS domain. Substrate is bound at residue 51 to 53 (NGG). Zn(2+) contacts are provided by His60 and Glu64. Residues Glu64, 93–94 (ND), 119–121 (STS), Ser124, and Gln174 each bind substrate. Zn(2+)-binding residues include Gln174 and His182.

It belongs to the SIS family. GmhA subfamily. As to quaternary structure, homotetramer. Requires Zn(2+) as cofactor.

The protein localises to the cytoplasm. It catalyses the reaction 2 D-sedoheptulose 7-phosphate = D-glycero-alpha-D-manno-heptose 7-phosphate + D-glycero-beta-D-manno-heptose 7-phosphate. It functions in the pathway carbohydrate biosynthesis; D-glycero-D-manno-heptose 7-phosphate biosynthesis; D-glycero-alpha-D-manno-heptose 7-phosphate and D-glycero-beta-D-manno-heptose 7-phosphate from sedoheptulose 7-phosphate: step 1/1. Catalyzes the isomerization of sedoheptulose 7-phosphate in D-glycero-D-manno-heptose 7-phosphate. In Chromohalobacter salexigens (strain ATCC BAA-138 / DSM 3043 / CIP 106854 / NCIMB 13768 / 1H11), this protein is Phosphoheptose isomerase.